Reading from the N-terminus, the 110-residue chain is Insulin growth factor-like family member 1 (110 aa).

The N-terminal stretch at 1 to 24 (MAPRGCIVAVFAIFCISRLLCSHG) is a signal peptide. N71 carries an N-linked (GlcNAc...) asparagine glycan.

Belongs to the IGFL family. In terms of assembly, homodimer; disulfide-linked. Detected in ovary and spinal cord.

Its subcellular location is the secreted. Its function is as follows. Probable ligand of the IGFLR1 cell membrane receptor. The polypeptide is Insulin growth factor-like family member 1 (IGFL1) (Homo sapiens (Human)).